A 119-amino-acid polypeptide reads, in one-letter code: Fluoride-specific ion channel FluC 2 (119 aa).

The helical transmembrane segment at 46 to 66 (FALGLLTFAGVTGDAALLVGV) threads the bilayer. Residues glycine 70 and threonine 73 each coordinate Na(+). A helical membrane pass occupies residues 96–116 (LNAVGNLACALVGIGLAWGIV).

This sequence belongs to the fluoride channel Fluc/FEX (TC 1.A.43) family.

The protein localises to the cell membrane. It catalyses the reaction fluoride(in) = fluoride(out). Its activity is regulated as follows. Na(+) is not transported, but it plays an essential structural role and its presence is essential for fluoride channel function. Fluoride-specific ion channel. Important for reducing fluoride concentration in the cell, thus reducing its toxicity. In Haloarcula marismortui (strain ATCC 43049 / DSM 3752 / JCM 8966 / VKM B-1809) (Halobacterium marismortui), this protein is Fluoride-specific ion channel FluC 2.